A 424-amino-acid polypeptide reads, in one-letter code: Glutamate-1-semialdehyde 2,1-aminomutase (424 aa).

The residue at position 263 (lysine 263) is an N6-(pyridoxal phosphate)lysine.

This sequence belongs to the class-III pyridoxal-phosphate-dependent aminotransferase family. HemL subfamily. As to quaternary structure, homodimer. It depends on pyridoxal 5'-phosphate as a cofactor.

It is found in the cytoplasm. It catalyses the reaction (S)-4-amino-5-oxopentanoate = 5-aminolevulinate. It participates in porphyrin-containing compound metabolism; protoporphyrin-IX biosynthesis; 5-aminolevulinate from L-glutamyl-tRNA(Glu): step 2/2. The polypeptide is Glutamate-1-semialdehyde 2,1-aminomutase (Campylobacter jejuni subsp. jejuni serotype O:23/36 (strain 81-176)).